The chain runs to 583 residues: Long-chain-fatty-acid--AMP ligase FadD26 (583 aa).

This sequence belongs to the ATP-dependent AMP-binding enzyme family.

It catalyses the reaction holo-[(phenol)carboxyphthiodiolenone synthase] + a long-chain fatty acid + ATP = a long-chain fatty acyl-[(phenol)carboxyphthiodiolenone synthase] + AMP + diphosphate. It carries out the reaction eicosanoate + holo-[(phenol)carboxyphthiodiolenone synthase] + ATP = icosanoyl-[(phenol)carboxyphthiodiolenone synthase] + AMP + diphosphate. The catalysed reaction is holo-[(phenol)carboxyphthiodiolenone synthase] + docosanoate + ATP = docosanoyl-[(phenol)carboxyphthiodiolenone synthase] + AMP + diphosphate. It participates in lipid metabolism; fatty acid biosynthesis. In terms of biological role, catalyzes the activation of long-chain fatty acids as acyl-adenylates (acyl-AMP), which are then transferred to the multifunctional polyketide synthase PpsA for further chain extension. Catalyzes the adenylation of the long-chain fatty acids eicosanoate (C20) or docosanoate (C22), and potentially the very-long-chain fatty acid lignocerate (C24). Involved in the biosynthesis of phthiocerol dimycocerosate (DIM A) and phthiodiolone dimycocerosate (DIM B). In Mycobacterium bovis (strain ATCC BAA-935 / AF2122/97), this protein is Long-chain-fatty-acid--AMP ligase FadD26 (fadD26).